A 931-amino-acid polypeptide reads, in one-letter code: MSSSDLLKGEFDGLNSEHFNMMQYLTQDTDEDDGSMVSPTSSADSMHQNLGVQQQQQQMLQAQQRQNQNGIFQPRRFPESPAMTDPCGNVSSSSSSSHHSDPMFSPNEFNGYAGANDNGNQTMNNIQSQQLSQQQHQQTRGGNLMMPQQSSIHAQMQNMNAPQFWSQPGTAAVNQPTNTLAQLNLFNIIRGGADSGMPSPVLEMPRKRSRLDTPCETPRIAPSFAGIDGFPDENYSQQQAIRFSKFQEEQWSPLYDINAQPLQQLQVHVVADKGFNYNSNDNCFVNQKKNHFQISVNVEASDTMPPKYVNFNNRLVPIRDFKLSFCGVKAEMPSSEITIRQSRADRKPHTHTPVLFEIQERRMTKVCVPRLHFSETTLNNQRKQKNRPNPEQKFFLLVVRLFASIDESEHGVLIQSYASEKVIVRATNPGSFEPQDTDIGWQRNGGALYTQGAVSVGTEHQVESAKLTVAGDIYMSGRIINPSDIRLKEAITERETAEAIENLLKLRVVDYRYKPEVADIWGLDEQQRHRTGLIAQELQAVLPDAVRDIGDYLTIDEGRVFYETVMATQQLCRMTGDLDSKIDEKVAEISRRLNEYAVRKKLASSMASNLNGDNKSLSYSRCSLTSTATNATSQPKRSRKHRAIKQAQSCGSRLSQGTVVTLVSIMAACLLAMSALYVLDWHNRNYGYHQHFETNTPSTKGELANLVISPANFMPSFQPDAPILLEKCFNPSCKTYCCTDTPPVVEDSRAIATHGLDNGDEVYPESPSNRTNGIARAPNLEHMAFETGVEIRIPALNVTLDQRYCVERSCNKRKGIFNVFVPVSRYMPDVALEIEIKAPISKVVSNCGAFPSTEFNHKVCPLSRTQQSESPVPTSTRLFDNIFELSMGSFIQSAYRFRVGYSTETCFSEDSNGSYEEYNLIFYRMCTLSSS.

The Cytoplasmic portion of the chain corresponds to 1–658 (MSSSDLLKGE…SCGSRLSQGT (658 aa)). The segment at 29–143 (TDEDDGSMVS…QQHQQTRGGN (115 aa)) is disordered. The span at 37–52 (VSPTSSADSMHQNLGV) shows a compositional bias: polar residues. Positions 53-68 (QQQQQQMLQAQQRQNQ) are enriched in low complexity. Residues 117-126 (DNGNQTMNNI) show a composition bias toward polar residues. Positions 127 to 138 (QSQQLSQQQHQQ) are enriched in low complexity. Positions 169 to 436 (GTAAVNQPTN…TNPGSFEPQD (268 aa)) form a DNA-binding region, NDT80. One can recognise a Peptidase S74 domain in the interval 483–582 (SDIRLKEAIT…RMTGDLDSKI (100 aa)). Residues 659-679 (VVTLVSIMAACLLAMSALYVL) form a helical membrane-spanning segment. Topologically, residues 680–931 (DWHNRNYGYH…FYRMCTLSSS (252 aa)) are lumenal. Residues Asn797 and Asn912 are each glycosylated (N-linked (GlcNAc...) asparagine).

It belongs to the MRF family. Homotrimer. Interacts with myrf-2. Interacts (via C-terminus) with pan-1 (via LRR regions); the interaction promotes the role of myrf-1 in the synaptic remodeling of DD GABAergic motor neurons at the cell membrane. Post-translationally, myelin regulatory factor: Follows autocatalytic cleavage via the peptidase S74 domain. Autoprocessing is apparently constitutive and is essential for transcriptional activity. Widely expressed in many tissues, including neuronal, muscle and epidermal stem cells. In neurons, expressed in dorsal D (DD) GABAergic motor neurons.

Its subcellular location is the endoplasmic reticulum membrane. It localises to the nucleus. The protein resides in the apical cell membrane. It is found in the cytoplasm. Constitutes a precursor of the transcription factor. Mediates the autocatalytic cleavage that releases the Myelin regulatory factor homolog 1, N-terminal component that specifically activates transcription of genes involved in synaptic rewiring during nervous system maturation. In terms of biological role, membrane-bound part that has no transcription factor activity and remains attached to the endoplasmic reticulum membrane following cleavage. Its function is as follows. Transcription factor that specifically activates expression of genes involved in synaptic rewiring during nervous system maturation. Specifically required for dorsal D (DD) GABAergic motor neurons synaptic rewiring. Acts in complex with myrf-2 paralog. The sequence is that of Myelin regulatory factor homolog 1 from Caenorhabditis elegans.